The sequence spans 153 residues: ORM1-like protein 2 (153 aa).

Over M1–G21 the chain is Cytoplasmic. 2 consecutive transmembrane segments (helical) span residues I22–F42 and F43–L63. Residues L64 to S105 lie on the Cytoplasmic side of the membrane. The helical transmembrane segment at P106 to I126 threads the bilayer. Residues N127–Y153 are Extracellular-facing.

Belongs to the ORM family. As to quaternary structure, ceramide-sensitive subunit of the serine palmitoyltransferase (SPT) complex, which is also composed of SPTLC1, SPTLC2/3 and SPTSSA/B.

The protein resides in the endoplasmic reticulum membrane. In terms of biological role, plays an essential role in the homeostatic regulation of sphingolipid de novo biosynthesis by modulating the activity of the serine palmitoyltransferase (SPT) in response to ceramide levels. When complexed to SPT, the binding of ceramides to its N-terminus stabilizes a conformation that block SPT substrate entry, hence preventing SPT catalytic activity. Through this mechanism, maintains ceramide levels at sufficient concentrations for the production of complex sphingolipids, but which prevents the accumulation of ceramides to levels that trigger apoptosis. This is ORM1-like protein 2 (ORMDL2) from Gallus gallus (Chicken).